The chain runs to 185 residues: Ribosome-recycling factor (185 aa).

Positions 138–157 (ELKKLEKDHTASEDEVKRAQ) are disordered.

The protein belongs to the RRF family.

The protein resides in the cytoplasm. Responsible for the release of ribosomes from messenger RNA at the termination of protein biosynthesis. May increase the efficiency of translation by recycling ribosomes from one round of translation to another. The sequence is that of Ribosome-recycling factor from Desulfitobacterium hafniense (strain DSM 10664 / DCB-2).